Consider the following 222-residue polypeptide: Glutathione S-transferase A4 (222 aa).

Met1 carries the N-acetylmethionine modification. One can recognise a GST N-terminal domain in the interval Ala3 to Gly83. Glutathione contacts are provided by residues Tyr9, Gln54–Val55, and Gln67–Thr68. The 124-residue stretch at Asn85–Pro208 folds into the GST C-terminal domain. Tyr212 contacts substrate.

This sequence belongs to the GST superfamily. Alpha family. As to quaternary structure, homodimer. In terms of tissue distribution, expressed at a high level in brain, placenta, and skeletal muscle and much lower in lung and liver.

Its subcellular location is the cytoplasm. It catalyses the reaction RX + glutathione = an S-substituted glutathione + a halide anion + H(+). Conjugation of reduced glutathione to a wide number of exogenous and endogenous hydrophobic electrophiles. This isozyme has a high catalytic efficiency with 4-hydroxyalkenals such as 4-hydroxynonenal (4-HNE). This chain is Glutathione S-transferase A4 (GSTA4), found in Homo sapiens (Human).